Reading from the N-terminus, the 801-residue chain is Phosphatidylinositol 4-phosphate 5-kinase 1 (801 aa).

The N-terminal stretch at 1–21 (MPGLHVVSFLVVLLLQLRSSG) is a signal peptide. MORN repeat units follow at residues 41 to 63 (YVGS…DGAL), 64 to 86 (YDGE…SGAS), 87 to 109 (YEGD…DGSV), 110 to 132 (YKGS…NSDT), 133 to 155 (YEGF…DGNV), 156 to 178 (YIGR…NGDT), 182 to 201 (NWLN…SGAC), and 202 to 223 (YIGT…PGSK). Residues 366 to 797 (GHRSYYLMLN…RFISFLEKVF (432 aa)) enclose the PIPK domain.

As to expression, expressed in young seedlings, shoot and seeds, and at lower level in roots, stem and leaf.

It carries out the reaction a 1,2-diacyl-sn-glycero-3-phospho-(1D-myo-inositol 4-phosphate) + ATP = a 1,2-diacyl-sn-glycero-3-phospho-(1D-myo-inositol-4,5-bisphosphate) + ADP + H(+). Involved in flowering. May suppress floral initiation by modifying the expression of genes related to floral induction. This is Phosphatidylinositol 4-phosphate 5-kinase 1 (PIPK1) from Oryza sativa subsp. japonica (Rice).